The following is a 245-amino-acid chain: Complement C1q subcomponent subunit A (245 aa).

The N-terminal stretch at 1 to 22 (METSQGWLVACVLTMTLVWTVA) is a signal peptide. Residues 28–114 (APNGKDGAPG…NPGNIRDQPR (87 aa)) are disordered. Positions 31–109 (GKDGAPGNPG…KGVKGNPGNI (79 aa)) constitute a Collagen-like domain. Residues Pro39 and Pro45 each carry the 4-hydroxyproline modification. 5-hydroxylysine is present on Lys48. O-linked (Gal...) hydroxylysine; alternate glycosylation occurs at Lys48. A 4-hydroxyproline modification is found at Pro54. At Lys67 the chain carries 5-hydroxylysine. A glycan (O-linked (Gal...) hydroxylysine; alternate) is linked at Lys67. A 4-hydroxyproline mark is found at Pro79 and Pro85. A compositionally biased stretch (low complexity) spans 79-99 (PGNVGLPGPSGPLGDSGPQGL). At Lys100 the chain carries 5-hydroxylysine. An O-linked (Gal...) hydroxylysine; alternate glycan is attached at Lys100. Positions 110-245 (RDQPRPAFSA…FSGFLIFPSA (136 aa)) constitute a C1q domain. The N-linked (GlcNAc...) asparagine glycan is linked to Asn146. Ca(2+) is bound at residue Gln199.

Core component of the complement C1 complex, a calcium-dependent complex composed of 1 molecule of the C1Q subcomplex, 2 molecules of C1R and 2 molecules of C1S. The C1Q subcomplex is composed 18 subunits: 3 chains of C1QA, C1QB, and C1QC trimerize to form 6 collagen-like triple helices connected to six globular ligand-recognition modules (C1q domain). Interacts with CR1 (via Sushi 24 and Sushi 25 domains). Interacts (via C-terminus) with CD33; this interaction activates CD33 inhibitory motifs. Post-translationally, O-linked glycans are assumed to be the Glc-Gal disaccharides typically found as secondary modifications of hydroxylated lysines in collagen-like domains.

It is found in the secreted. It localises to the cell surface. The C1Q subcomplex is inhibited by sulfated molecules, such as triterpenoid sulfates, heparan sulfate, or chondroitin sulfates. In terms of biological role, core component of the complement C1 complex, a multiprotein complex that initiates the classical pathway of the complement system, a cascade of proteins that leads to phagocytosis and breakdown of pathogens and signaling that strengthens the adaptive immune system. The classical complement pathway is initiated by the C1Q subcomplex of the C1 complex, which specifically binds IgG or IgM immunoglobulins complexed with antigens, forming antigen-antibody complexes on the surface of pathogens: C1QA, together with C1QB and C1QC, specifically recognizes and binds the Fc regions of IgG or IgM via its C1q domain. Immunoglobulin-binding activates the proenzyme C1R, which cleaves C1S, initiating the proteolytic cascade of the complement system. The C1Q subcomplex is activated by a hexamer of IgG complexed with antigens, while it is activated by a pentameric IgM. The C1Q subcomplex also recognizes and binds phosphatidylserine exposed on the surface of cells undergoing programmed cell death, possibly promoting activation of the complement system. The chain is Complement C1q subcomponent subunit A from Mus musculus (Mouse).